We begin with the raw amino-acid sequence, 38 residues long: Large ribosomal subunit protein bL36 (38 aa).

This sequence belongs to the bacterial ribosomal protein bL36 family.

This is Large ribosomal subunit protein bL36 from Flavobacterium psychrophilum (strain ATCC 49511 / DSM 21280 / CIP 103535 / JIP02/86).